Here is a 369-residue protein sequence, read N- to C-terminus: Phosphate acyltransferase (369 aa).

The protein belongs to the PlsX family. As to quaternary structure, homodimer. Probably interacts with PlsY.

The protein resides in the cytoplasm. The enzyme catalyses a fatty acyl-[ACP] + phosphate = an acyl phosphate + holo-[ACP]. Its pathway is lipid metabolism; phospholipid metabolism. Catalyzes the reversible formation of acyl-phosphate (acyl-PO(4)) from acyl-[acyl-carrier-protein] (acyl-ACP). This enzyme utilizes acyl-ACP as fatty acyl donor, but not acyl-CoA. The sequence is that of Phosphate acyltransferase from Gluconobacter oxydans (strain 621H) (Gluconobacter suboxydans).